We begin with the raw amino-acid sequence, 941 residues long: Putative helicase 121R (941 aa).

Residues 285 to 323 are a coiled coil; that stretch reads LKQELKDIEGENSETIKRNLKDAKDLLKILNKKRANEYN. Positions 492–514 are disordered; sequence DDSGRDSEEDSQEEEVSSSQEQL. Residues 498–507 show a composition bias toward acidic residues; it reads SEEDSQEEEV. The region spanning 609–791 is the SF3 helicase domain; the sequence is EEVLELYNFL…FVAREKCPET (183 aa). 653 to 660 is an ATP binding site; that stretch reads GNGNNGKS.

This sequence belongs to the IIV-6 184L family.

The sequence is that of Putative helicase 121R from Invertebrate iridescent virus 3 (IIV-3).